Reading from the N-terminus, the 331-residue chain is Phosphate acyltransferase (331 aa).

This sequence belongs to the PlsX family. In terms of assembly, homodimer. Probably interacts with PlsY.

It localises to the cytoplasm. It catalyses the reaction a fatty acyl-[ACP] + phosphate = an acyl phosphate + holo-[ACP]. It functions in the pathway lipid metabolism; phospholipid metabolism. Its function is as follows. Catalyzes the reversible formation of acyl-phosphate (acyl-PO(4)) from acyl-[acyl-carrier-protein] (acyl-ACP). This enzyme utilizes acyl-ACP as fatty acyl donor, but not acyl-CoA. The polypeptide is Phosphate acyltransferase (Wolinella succinogenes (strain ATCC 29543 / DSM 1740 / CCUG 13145 / JCM 31913 / LMG 7466 / NCTC 11488 / FDC 602W) (Vibrio succinogenes)).